We begin with the raw amino-acid sequence, 444 residues long: Serine/threonine-protein kinase 2 (444 aa).

One can recognise a Protein kinase domain in the interval 87–444 (NRDFYHLSTG…WIDGKSTSHQ (358 aa)). ATP-binding positions include 93 to 101 (LSTGGYGII) and Lys-118. The Proton acceptor role is filled by Asp-307.

It belongs to the protein kinase superfamily. Ser/Thr protein kinase family. Poxviruses subfamily. In terms of processing, phosphorylated in vivo. Autophosphorylated in vitro.

It is found in the host endoplasmic reticulum. The protein resides in the host endoplasmic reticulum-Golgi intermediate compartment. The catalysed reaction is L-seryl-[protein] + ATP = O-phospho-L-seryl-[protein] + ADP + H(+). The enzyme catalyses L-threonyl-[protein] + ATP = O-phospho-L-threonyl-[protein] + ADP + H(+). Essential serine-protein kinase involved in the early stage of virion morphogenesis. This is Serine/threonine-protein kinase 2 (OPG054) from Vertebrata (FPV).